The chain runs to 401 residues: 8-amino-7-oxononanoate synthase (401 aa).

Arginine 24 serves as a coordination point for substrate. Position 111–112 (111–112 (GF)) interacts with pyridoxal 5'-phosphate. Histidine 137 provides a ligand contact to substrate. The pyridoxal 5'-phosphate site is built by serine 183, histidine 211, and threonine 240. Lysine 243 carries the post-translational modification N6-(pyridoxal phosphate)lysine. Threonine 357 provides a ligand contact to substrate.

It belongs to the class-II pyridoxal-phosphate-dependent aminotransferase family. BioF subfamily. In terms of assembly, homodimer. The cofactor is pyridoxal 5'-phosphate.

It catalyses the reaction 6-carboxyhexanoyl-[ACP] + L-alanine + H(+) = (8S)-8-amino-7-oxononanoate + holo-[ACP] + CO2. It functions in the pathway cofactor biosynthesis; biotin biosynthesis. Catalyzes the decarboxylative condensation of pimeloyl-[acyl-carrier protein] and L-alanine to produce 8-amino-7-oxononanoate (AON), [acyl-carrier protein], and carbon dioxide. This chain is 8-amino-7-oxononanoate synthase, found in Xanthomonas axonopodis pv. citri (strain 306).